Here is a 740-residue protein sequence, read N- to C-terminus: Transcription activator of gluconeogenesis NCU03938 (740 aa).

The disordered stretch occupies residues 1–66 (MPDDVGPAEA…KYDPKDPLRP (66 aa)). Residues 19-37 (SDNEYDETEVTTKDDDDEK) are compositionally biased toward acidic residues. A compositionally biased stretch (basic and acidic residues) spans 52–65 (GDQKKKYDPKDPLR). Residues 75–103 (CYACQRAHLTCGDERPCQRCIKRGLAEAC) constitute a DNA-binding region (zn(2)-C6 fungal-type). Disordered stretches follow at residues 333-405 (PAGP…RQRD), 532-579 (NSDT…KEQP), and 639-674 (APTA…PTGV). A compositionally biased stretch (polar residues) spans 337–351 (TSLQSPSTENNSPQP). The 72-residue stretch at 475 to 546 (ALFEHEEFMH…SISSKGGRGG (72 aa)) folds into the PAS domain. A compositionally biased stretch (low complexity) spans 639 to 658 (APTASGGSGSSNGTVVNGGP).

It belongs to the ERT1/acuK family.

Its subcellular location is the nucleus. Transcription factor which regulates nonfermentable carbon utilization. Activator of gluconeogenetic genes. This Neurospora crassa (strain ATCC 24698 / 74-OR23-1A / CBS 708.71 / DSM 1257 / FGSC 987) protein is Transcription activator of gluconeogenesis NCU03938.